A 133-amino-acid polypeptide reads, in one-letter code: Male-specific protein scotti (133 aa).

The segment at 11–57 (FPSNGLGNNNNDPNQQRGERPRQPHPDLGWILDAPNEPPRNRNPLLY) is disordered. A compositionally biased stretch (low complexity) spans 14–24 (NGLGNNNNDPN). The N-linked (GlcNAc...) asparagine glycan is linked to asparagine 83.

The protein belongs to the male-specific scotti family.

In terms of biological role, post-meiotically transcribed gene that has a role in late spermiogenesis; required for actin cone progression during spermatid individualization. The protein is Male-specific protein scotti of Drosophila persimilis (Fruit fly).